The following is a 148-amino-acid chain: Hemoglobin subunit beta (148 aa).

The 146-residue stretch at 3–148 folds into the Globin domain; sequence DWTDAERSAI…VVSALGRQYH (146 aa). Positions 64 and 93 each coordinate heme b.

This sequence belongs to the globin family. As to quaternary structure, heterotetramer of two alpha chains and two beta chains. In terms of tissue distribution, red blood cells.

Involved in oxygen transport from gills to the various peripheral tissues. This chain is Hemoglobin subunit beta (hbb), found in Salmo salar (Atlantic salmon).